The chain runs to 172 residues: Ribosome maturation factor RimM (172 aa).

The 73-residue stretch at 99–171 folds into the PRC barrel domain; sequence DDIPTWNYFI…LLTVEVPDGL (73 aa).

Belongs to the RimM family. In terms of assembly, binds ribosomal protein uS19.

It localises to the cytoplasm. Its function is as follows. An accessory protein needed during the final step in the assembly of 30S ribosomal subunit, possibly for assembly of the head region. Essential for efficient processing of 16S rRNA. May be needed both before and after RbfA during the maturation of 16S rRNA. It has affinity for free ribosomal 30S subunits but not for 70S ribosomes. The sequence is that of Ribosome maturation factor RimM from Phocaeicola vulgatus (strain ATCC 8482 / DSM 1447 / JCM 5826 / CCUG 4940 / NBRC 14291 / NCTC 11154) (Bacteroides vulgatus).